A 279-amino-acid polypeptide reads, in one-letter code: Shikimate dehydrogenase (NADP(+)) (279 aa).

Residues 19 to 21 (SRS) and T66 contribute to the shikimate site. K70 serves as the catalytic Proton acceptor. Shikimate-binding residues include N91 and D106. NADP(+)-binding positions include 129-133 (GAGGA) and F222. Residue Y224 coordinates shikimate. Position 243 (G243) interacts with NADP(+).

Belongs to the shikimate dehydrogenase family. As to quaternary structure, homodimer.

It carries out the reaction shikimate + NADP(+) = 3-dehydroshikimate + NADPH + H(+). It functions in the pathway metabolic intermediate biosynthesis; chorismate biosynthesis; chorismate from D-erythrose 4-phosphate and phosphoenolpyruvate: step 4/7. Its function is as follows. Involved in the biosynthesis of the chorismate, which leads to the biosynthesis of aromatic amino acids. Catalyzes the reversible NADPH linked reduction of 3-dehydroshikimate (DHSA) to yield shikimate (SA). The polypeptide is Shikimate dehydrogenase (NADP(+)) (Anaeromyxobacter sp. (strain Fw109-5)).